A 459-amino-acid polypeptide reads, in one-letter code: Argininosuccinate lyase (459 aa).

Belongs to the lyase 1 family. Argininosuccinate lyase subfamily.

The protein resides in the cytoplasm. It catalyses the reaction 2-(N(omega)-L-arginino)succinate = fumarate + L-arginine. It functions in the pathway amino-acid biosynthesis; L-arginine biosynthesis; L-arginine from L-ornithine and carbamoyl phosphate: step 3/3. In Staphylococcus aureus (strain MSSA476), this protein is Argininosuccinate lyase.